Reading from the N-terminus, the 258-residue chain is UPF0246 protein YaaA (258 aa).

The protein belongs to the UPF0246 family.

The polypeptide is UPF0246 protein YaaA (Escherichia coli O157:H7 (strain EC4115 / EHEC)).